A 398-amino-acid chain; its full sequence is Elongation factor Tu (398 aa).

The 198-residue stretch at 10–207 (KPHVNIGTIG…TVDEYIPEPE (198 aa)) folds into the tr-type G domain. Residues 19–26 (GHVDHGKT) are G1. Residue 19 to 26 (GHVDHGKT) coordinates GTP. Position 26 (Thr-26) interacts with Mg(2+). A G2 region spans residues 63–67 (GITIN). Positions 84 to 87 (DAPG) are G3. GTP contacts are provided by residues 84–88 (DAPGH) and 139–142 (NKVD). Positions 139-142 (NKVD) are G4. The segment at 177–179 (SAL) is G5.

The protein belongs to the TRAFAC class translation factor GTPase superfamily. Classic translation factor GTPase family. EF-Tu/EF-1A subfamily. In terms of assembly, monomer.

The protein resides in the cytoplasm. The catalysed reaction is GTP + H2O = GDP + phosphate + H(+). In terms of biological role, GTP hydrolase that promotes the GTP-dependent binding of aminoacyl-tRNA to the A-site of ribosomes during protein biosynthesis. The polypeptide is Elongation factor Tu (Streptococcus pyogenes serotype M49 (strain NZ131)).